We begin with the raw amino-acid sequence, 282 residues long: Short-chain dehydrogenase/reductase prx7 (282 aa).

NADP(+) is bound by residues N23, N70, Y150, K154, V183, and T185. The active-site Proton acceptor is Y150. The active-site Lowers pKa of active site Tyr is the K154.

Belongs to the short-chain dehydrogenases/reductases (SDR) family.

The protein operates within sesquiterpene biosynthesis. In terms of biological role, short-chain dehydrogenase/reductase; part of the gene cluster that mediates the biosynthesis of PR-toxin, a bicyclic sesquiterpene belonging to the eremophilane class and acting as a mycotoxin. The first step of the pathway is catalyzed by the aristolochene synthase which performs the cyclization of trans,trans-farnesyl diphosphate (FPP) to the bicyclic sesquiterpene aristolochene. Following the formation of aristolochene, the non-oxygenated aristolochene is converted to the trioxygenated intermediate eremofortin B, via 7-epi-neopetasone. This conversion appears to involve three enzymes, a hydroxysterol oxidase-like enzyme, the quinone-oxidase prx3 that forms the quinone-type-structure in the bicyclic nucleus of aristolochene with the C8-oxo group and the C-3 hydroxyl group, and the P450 monooxygenase prx9 that introduces the epoxide at the double bond between carbons 1 and 2. No monoxy or dioxy-intermediates have been reported to be released to the broth, so these three early oxidative reactions may be coupled together. Eremofortin B is further oxidized by another P450 monooxygenase, that introduces a second epoxide between carbons 7 and 11 prior to acetylation to eremofortin A by the acetyltransferase prx11. The second epoxidation may be performed by a second P450 monooxygenase. After the acetylation step, eremofortin A is converted to eremofortin C and then to PR-toxin. First the conversion of eremofortin A to eremofortin C proceeds by oxidation of the side chain of the molecule at C-12 and is catalyzed by the short-chain oxidoreductase prx1. The cytochrome P450 monooxygenase prx8 also plays a role in this step. The primary alcohol formed at C-12 is finally oxidized by the short-chain alcohol dehydrogenase prx4 that forms PR-toxin. The sequence is that of Short-chain dehydrogenase/reductase prx7 from Penicillium rubens (strain ATCC 28089 / DSM 1075 / NRRL 1951 / Wisconsin 54-1255) (Penicillium chrysogenum).